The following is a 441-amino-acid chain: Maltose-6'-phosphate glucosidase MalH (441 aa).

4–70 lines the NAD(+) pocket; the sequence is FSVVIAGGGS…PEIEFLATTN (67 aa). Positions 93 and 147 each coordinate substrate. Cysteine 169 lines the Mn(2+) pocket. Aspartate 170 functions as the Proton donor in the catalytic mechanism. Residue histidine 200 coordinates Mn(2+). Tyrosine 264 serves as the catalytic Proton acceptor. A substrate-binding site is contributed by arginine 284.

As to quaternary structure, homotetramer. Requires NAD(+) as cofactor. Mn(2+) is required as a cofactor.

The catalysed reaction is alpha-maltose 6'-phosphate + H2O = D-glucose 6-phosphate + D-glucose. In terms of biological role, catalyzes the hydrolysis of O-alpha-linked disaccharide 6-phosphates, including maltose-6'P and all five phosphorylated isomers of sucrose, but not sucrose-6P. Does not hydrolyze beta-linked disaccharide 6-phosphates such as cellobiose-6'P and gentiobiose-6'P. Is involved in the dissimilation of maltose and related O-alpha-linked glucosides produced via the phosphoenolpyruvate-dependent sugar phosphotransferase system (PEP-PTS). The protein is Maltose-6'-phosphate glucosidase MalH (malH) of Clostridium acetobutylicum (strain ATCC 824 / DSM 792 / JCM 1419 / IAM 19013 / LMG 5710 / NBRC 13948 / NRRL B-527 / VKM B-1787 / 2291 / W).